A 392-amino-acid chain; its full sequence is Glutamate 5-kinase (392 aa).

An ATP-binding site is contributed by Lys-17. Substrate-binding residues include Ser-57, Asp-144, and Asn-156. ATP is bound at residue 176–177 (SD). One can recognise a PUA domain in the interval 282–359 (AGILSVDAGA…AEIEALLGYA (78 aa)). The disordered stretch occupies residues 373-392 (TEQTGRKAGKSTKKKDEAHA).

The protein belongs to the glutamate 5-kinase family.

It is found in the cytoplasm. It catalyses the reaction L-glutamate + ATP = L-glutamyl 5-phosphate + ADP. It participates in amino-acid biosynthesis; L-proline biosynthesis; L-glutamate 5-semialdehyde from L-glutamate: step 1/2. Catalyzes the transfer of a phosphate group to glutamate to form L-glutamate 5-phosphate. This Allorhizobium ampelinum (strain ATCC BAA-846 / DSM 112012 / S4) (Agrobacterium vitis (strain S4)) protein is Glutamate 5-kinase.